The primary structure comprises 268 residues: MRRIDFRFAELRANGRKALIPFITAGDPSLEATVPVMHALVRAGADVIELGVPFSDPMADGPTIQRSSERALGRGAGLAYVLEAVHEFRREDAATPVVLMGYLNPIEIHGTRRFAEAAVAAGVDGLLLVDLPPEEADETRAIFTEVGLALIALASPTTSEQRLDMLCSTAQGYLYYVSFAGVTGASNLLDTHAASDRLRQLRQRAGAPVVAGFGIKDAASAAAMAVDADGVVVGSALVAALAEADDVRSARERAEAFLAPLRQALDQA.

Catalysis depends on proton acceptor residues E49 and D60.

This sequence belongs to the TrpA family. Tetramer of two alpha and two beta chains.

It catalyses the reaction (1S,2R)-1-C-(indol-3-yl)glycerol 3-phosphate + L-serine = D-glyceraldehyde 3-phosphate + L-tryptophan + H2O. It participates in amino-acid biosynthesis; L-tryptophan biosynthesis; L-tryptophan from chorismate: step 5/5. In terms of biological role, the alpha subunit is responsible for the aldol cleavage of indoleglycerol phosphate to indole and glyceraldehyde 3-phosphate. The sequence is that of Tryptophan synthase alpha chain from Xanthomonas oryzae pv. oryzae (strain MAFF 311018).